The primary structure comprises 470 residues: Cysteine--tRNA ligase (470 aa).

Zn(2+) is bound at residue C28. Positions 30 to 40 match the 'HIGH' region motif; the sequence is PTVYNYIHIGN. Positions 211, 236, and 240 each coordinate Zn(2+). A 'KMSKS' region motif is present at residues 270–274; that stretch reads KMSKS. Position 273 (K273) interacts with ATP.

This sequence belongs to the class-I aminoacyl-tRNA synthetase family. In terms of assembly, monomer. Zn(2+) is required as a cofactor.

It is found in the cytoplasm. The enzyme catalyses tRNA(Cys) + L-cysteine + ATP = L-cysteinyl-tRNA(Cys) + AMP + diphosphate. In Enterococcus faecalis (strain ATCC 700802 / V583), this protein is Cysteine--tRNA ligase.